Consider the following 101-residue polypeptide: UPF0235 protein Mevan_0378 (101 aa).

It belongs to the UPF0235 family.

In Methanococcus vannielii (strain ATCC 35089 / DSM 1224 / JCM 13029 / OCM 148 / SB), this protein is UPF0235 protein Mevan_0378.